Consider the following 127-residue polypeptide: Putative platinum sensitivity protein 1 (127 aa).

The polypeptide is Putative platinum sensitivity protein 1 (PSY1) (Saccharomyces cerevisiae (strain ATCC 204508 / S288c) (Baker's yeast)).